We begin with the raw amino-acid sequence, 411 residues long: LL-diaminopimelate aminotransferase (411 aa).

Residues tyrosine 15 and glycine 42 each contribute to the substrate site. Pyridoxal 5'-phosphate-binding positions include tyrosine 72, 108–109 (AK), tyrosine 132, asparagine 187, tyrosine 218, and 246–248 (SFS). Substrate is bound by residues lysine 109, tyrosine 132, and asparagine 187. The residue at position 249 (lysine 249) is an N6-(pyridoxal phosphate)lysine. Pyridoxal 5'-phosphate-binding residues include arginine 257 and asparagine 292. Positions 292 and 388 each coordinate substrate.

It belongs to the class-I pyridoxal-phosphate-dependent aminotransferase family. LL-diaminopimelate aminotransferase subfamily. As to quaternary structure, homodimer. Requires pyridoxal 5'-phosphate as cofactor.

It catalyses the reaction (2S,6S)-2,6-diaminopimelate + 2-oxoglutarate = (S)-2,3,4,5-tetrahydrodipicolinate + L-glutamate + H2O + H(+). Its pathway is amino-acid biosynthesis; L-lysine biosynthesis via DAP pathway; LL-2,6-diaminopimelate from (S)-tetrahydrodipicolinate (aminotransferase route): step 1/1. Involved in the synthesis of meso-diaminopimelate (m-DAP or DL-DAP), required for both lysine and peptidoglycan biosynthesis. Catalyzes the direct conversion of tetrahydrodipicolinate to LL-diaminopimelate. This is LL-diaminopimelate aminotransferase from Crocosphaera subtropica (strain ATCC 51142 / BH68) (Cyanothece sp. (strain ATCC 51142)).